A 606-amino-acid chain; its full sequence is Elongation factor 4 (606 aa).

A tr-type G domain is found at 7–189; the sequence is SRIRNFCIIA…AVVDRVPPPK (183 aa). GTP is bound by residues 19–24 and 136–139; these read DHGKST and NKID.

Belongs to the TRAFAC class translation factor GTPase superfamily. Classic translation factor GTPase family. LepA subfamily.

The protein localises to the cell inner membrane. It catalyses the reaction GTP + H2O = GDP + phosphate + H(+). Required for accurate and efficient protein synthesis under certain stress conditions. May act as a fidelity factor of the translation reaction, by catalyzing a one-codon backward translocation of tRNAs on improperly translocated ribosomes. Back-translocation proceeds from a post-translocation (POST) complex to a pre-translocation (PRE) complex, thus giving elongation factor G a second chance to translocate the tRNAs correctly. Binds to ribosomes in a GTP-dependent manner. The sequence is that of Elongation factor 4 from Parasynechococcus marenigrum (strain WH8102).